The sequence spans 78 residues: Large ribosomal subunit protein bL28 (78 aa).

A disordered region spans residues 1–28 (MSAICQVTGRQPGYGKSVSHSHRRTSRR).

Belongs to the bacterial ribosomal protein bL28 family.

The chain is Large ribosomal subunit protein bL28 from Corynebacterium diphtheriae (strain ATCC 700971 / NCTC 13129 / Biotype gravis).